The chain runs to 378 residues: Spermidine/putrescine import ATP-binding protein PotA (378 aa).

The region spanning 18-248 is the ABC transporter domain; the sequence is VQLAGIRKCF…PKNLFVAGFI (231 aa). 50 to 57 contacts ATP; the sequence is GPSGCGKT.

Belongs to the ABC transporter superfamily. Spermidine/putrescine importer (TC 3.A.1.11.1) family. The complex is composed of two ATP-binding proteins (PotA), two transmembrane proteins (PotB and PotC) and a solute-binding protein (PotD).

The protein localises to the cell inner membrane. It carries out the reaction ATP + H2O + polyamine-[polyamine-binding protein]Side 1 = ADP + phosphate + polyamineSide 2 + [polyamine-binding protein]Side 1.. Functionally, part of the ABC transporter complex PotABCD involved in spermidine/putrescine import. Responsible for energy coupling to the transport system. In Shigella flexneri, this protein is Spermidine/putrescine import ATP-binding protein PotA.